We begin with the raw amino-acid sequence, 241 residues long: Small ribosomal subunit protein uS2 (241 aa).

It belongs to the universal ribosomal protein uS2 family.

This chain is Small ribosomal subunit protein uS2, found in Escherichia coli (strain 55989 / EAEC).